The following is a 150-amino-acid chain: Large ribosomal subunit protein bL9 (150 aa).

The protein belongs to the bacterial ribosomal protein bL9 family.

Its function is as follows. Binds to the 23S rRNA. The sequence is that of Large ribosomal subunit protein bL9 from Neisseria gonorrhoeae.